The primary structure comprises 295 residues: Undecaprenyl-diphosphatase (295 aa).

Helical transmembrane passes span Pro39 to Phe59, Trp97 to Ile117, Leu121 to Val141, Ala198 to Ile218, Ala232 to Leu252, and Phe263 to Leu283.

It belongs to the UppP family.

It localises to the cell membrane. It catalyses the reaction di-trans,octa-cis-undecaprenyl diphosphate + H2O = di-trans,octa-cis-undecaprenyl phosphate + phosphate + H(+). Its function is as follows. Catalyzes the dephosphorylation of undecaprenyl diphosphate (UPP). Confers resistance to bacitracin. The chain is Undecaprenyl-diphosphatase from Bifidobacterium animalis subsp. lactis (strain AD011).